Here is a 1651-residue protein sequence, read N- to C-terminus: Roundabout homolog 1 (1651 aa).

Positions 1-25 (MKWKHVPFLVMISLLSLSPNHLFLA) are cleaved as a signal peptide. The Extracellular segment spans residues 26–897 (QLIPDPEDVE…QQISDVVKQP (872 aa)). The disordered stretch occupies residues 33–57 (DVERGNDHGTPIPTSDNDDNSLGYT). Polar residues predominate over residues 44–56 (IPTSDNDDNSLGY). 5 Ig-like C2-type domains span residues 68-164 (PRIV…ASLE), 170-257 (DDFR…AELT), 262-346 (PSFV…ATLT), 351-446 (PHFV…LEVT), and 455-541 (PVIR…AYIE). A disulfide bridge links Cys-89 with Cys-147. An N-linked (GlcNAc...) asparagine glycan is attached at Asn-160. Intrachain disulfides connect Cys-191–Cys-240, Cys-283–Cys-330, and Cys-372–Cys-428. An N-linked (GlcNAc...) asparagine glycan is attached at Asn-463. A disulfide bridge connects residues Cys-476 and Cys-525. 3 consecutive Fibronectin type-III domains span residues 563–657 (APSK…TQDV), 676–773 (AVLH…TLEE), and 778–874 (PPQG…LDAH). Asn-790, Asn-820, and Asn-827 each carry an N-linked (GlcNAc...) asparagine glycan. Residues 898–918 (AFIAGIGAACWIILMVFSIWL) form a helical membrane-spanning segment. The Cytoplasmic portion of the chain corresponds to 919 to 1651 (YRHRKKRNGL…NNEELEETES (733 aa)). At Ser-940 the chain carries Phosphoserine. Position 948 is a phosphothreonine (Thr-948). Position 1038 is a phosphotyrosine; by ABL; in vitro (Tyr-1038). Ser-1055 is subject to Phosphoserine. A phosphotyrosine; by ABL; in vitro mark is found at Tyr-1073 and Tyr-1114. Disordered regions lie at residues 1124 to 1202 (KDYR…SEEY), 1224 to 1337 (YLQQ…ADME), 1352 to 1397 (EQTP…DGSF), and 1420 to 1651 (RRQM…ETES). Residues 1137 to 1146 (PYNQSYDQNT) show a composition bias toward polar residues. A compositionally biased stretch (low complexity) spans 1147–1163 (GGSYNSSDRGSSTSGSQ). The segment covering 1186 to 1196 (LPPPPAHPPPH) has biased composition (pro residues). At Thr-1240 the chain carries Phosphothreonine. Residues 1255 to 1269 (YSHQSTATLTPSPQE) are compositionally biased toward polar residues. Over residues 1281–1293 (ETGHMQHQPDRRR) the composition is skewed to basic and acidic residues. Residues 1296-1307 (VSPPPPPRPISP) are compositionally biased toward pro residues. Ser-1297 carries the phosphoserine modification. Positions 1322–1336 (MDTDAPEEEEDEADM) are enriched in acidic residues. Residues 1384-1397 (SSGRSSVSSSDGSF) are compositionally biased toward low complexity. The segment covering 1438–1451 (PRPTSPVSTDSNMS) has biased composition (polar residues). The segment covering 1459-1470 (RPAKKLKHQPGH) has biased composition (basic residues). Residues 1480 to 1490 (LPPPPVPPPAI) are compositionally biased toward pro residues. Basic and acidic residues-rich tracts occupy residues 1516 to 1541 (ARTDRSSDRKGSSYKGREVLDGRQVV) and 1549 to 1573 (DPREAQEQQNDGKGRGNKAAKRDLP). The segment covering 1592 to 1601 (FPTSNNPRDP) has biased composition (polar residues). Positions 1602–1614 (SSSSSMSSRGSGS) are enriched in low complexity. The span at 1642 to 1651 (NNEELEETES) shows a compositional bias: acidic residues.

It belongs to the immunoglobulin superfamily. ROBO family. In terms of assembly, homodimer. Dimerization is mediated by the extracellular domain and is independent of SLIT liganding. Interacts with SLIT1. Interacts with SLIT2. Interacts with FLRT3. Interacts with MYO9B (via Rho-GAP domain). Ubiquitinated. May be deubiquitinated by USP33. As to expression, widely expressed, with exception of kidney.

The protein resides in the cell membrane. The protein localises to the cell projection. It is found in the axon. It localises to the endoplasmic reticulum-Golgi intermediate compartment membrane. Receptor for SLIT1 and SLIT2 that mediates cellular responses to molecular guidance cues in cellular migration, including axonal navigation at the ventral midline of the neural tube and projection of axons to different regions during neuronal development. Interaction with the intracellular domain of FLRT3 mediates axon attraction towards cells expressing NTN1. In axon growth cones, the silencing of the attractive effect of NTN1 by SLIT2 may require the formation of a ROBO1-DCC complex. Plays a role in the regulation of cell migration via its interaction with MYO9B; inhibits MYO9B-mediated stimulation of RHOA GTPase activity, and thereby leads to increased levels of active, GTP-bound RHOA. May be required for lung development. This Homo sapiens (Human) protein is Roundabout homolog 1 (ROBO1).